A 569-amino-acid polypeptide reads, in one-letter code: Methionine--tRNA ligase (569 aa).

Residues 11-21 (PYINGVKHLGN) carry the 'HIGH' region motif. Cys-143, Cys-146, Cys-156, and Cys-159 together coordinate Zn(2+). A 'KMSKS' region motif is present at residues 342-346 (KFSTS). Thr-345 contributes to the ATP binding site.

Belongs to the class-I aminoacyl-tRNA synthetase family. MetG type 1 subfamily. In terms of assembly, monomer. Zn(2+) is required as a cofactor.

Its subcellular location is the cytoplasm. It carries out the reaction tRNA(Met) + L-methionine + ATP = L-methionyl-tRNA(Met) + AMP + diphosphate. Functionally, is required not only for elongation of protein synthesis but also for the initiation of all mRNA translation through initiator tRNA(fMet) aminoacylation. This chain is Methionine--tRNA ligase, found in Caulobacter sp. (strain K31).